The sequence spans 356 residues: MQSGEESRLGIKCASLHEELTQIVIDQDVGPLQRVPASEFLARLVEHMGQTIPREVFGAEAETGTRDLERLGAIVAYIDENFAAQNVLPFTIQRICELCYHPLHYFRVGELRKFVNALEKVCYVRSSWSAGYGAVPSPAEGTPTREASVDVSMSKIPWLPDDGGRDLRQFIEKIESIVSVNFGYEDDEDEGRDAAIQEYYDNEGAGDDEDDDQDYVDEDSATSEDEEEDVEEEEEEEGPEPEVGLEPVHAESAPEECVGTNKRTTAEREDCHMQPCAAAHSTDGAHPCGLKRSKLQEDGATMASPPDIVAEGGSHDPQVVDASKPPQLTTSATNVSCNASIEATVSLDDDSTAGGE.

A compositionally biased stretch (acidic residues) spans 202 to 240 (NEGAGDDEDDDQDYVDEDSATSEDEEEDVEEEEEEEGPE). The segment at 202–335 (NEGAGDDEDD…PQLTTSATNV (134 aa)) is disordered. Residues 326 to 335 (PQLTTSATNV) show a composition bias toward polar residues.

This sequence belongs to the PPP4R2 family. As to quaternary structure, regulatory subunit (R2) of the histone H2A phosphatase complex (HTP-C) consisting of PPH3, PSY2 and PSY4.

It is found in the nucleus. In terms of biological role, regulatory subunit of the histone H2A phosphatase complex, which dephosphorylates H2AS128ph (gamma-H2A) that has been displaced from sites of DNA lesions in the double-stranded DNA break repair process. Dephosphorylation is necessary for efficient recovery from the DNA damage checkpoint. In Eremothecium gossypii (strain ATCC 10895 / CBS 109.51 / FGSC 9923 / NRRL Y-1056) (Yeast), this protein is Serine/threonine-protein phosphatase 4 regulatory subunit 2 (PSY4).